The following is a 92-amino-acid chain: Small ribosomal subunit protein uS19 (92 aa).

This sequence belongs to the universal ribosomal protein uS19 family.

Functionally, protein S19 forms a complex with S13 that binds strongly to the 16S ribosomal RNA. This chain is Small ribosomal subunit protein uS19, found in Yersinia pestis (strain Pestoides F).